Reading from the N-terminus, the 473-residue chain is LETM1 domain-containing protein mdm28, mitochondrial (473 aa).

A mitochondrion-targeting transit peptide spans 1–73 (MLRNRLFKTP…FYNIGSSRLY (73 aa)). The Mitochondrial intermembrane portion of the chain corresponds to 74–161 (STETPTPSKV…LTRTLKDIGR (88 aa)). A helical membrane pass occupies residues 162–182 (LVPFSVFVVVPFAELLLPIAV). Topologically, residues 183–473 (KLFPNLLPST…ESNIPKNERK (291 aa)) are mitochondrial matrix. Residues 205–398 (QLRKTRNEVS…LQDTLASIPD (194 aa)) form the Letm1 RBD domain. Residues 430-473 (EEEAEHVAEHPDLAKKQTEENKATSKPAVSAKSPESNIPKNERK) are disordered. Over residues 434–452 (EHVAEHPDLAKKQTEENKA) the composition is skewed to basic and acidic residues. The segment covering 462–473 (SPESNIPKNERK) has biased composition (polar residues).

It localises to the mitochondrion inner membrane. Involved in mitochondrial potassium homeostasis through the mitochondrial K(+)/H(+) exchange regulation. The protein is LETM1 domain-containing protein mdm28, mitochondrial (mdm28) of Schizosaccharomyces pombe (strain 972 / ATCC 24843) (Fission yeast).